Here is an 82-residue protein sequence, read N- to C-terminus: RNA-binding protein YbxF (82 aa).

Belongs to the eukaryotic ribosomal protein eL8 family.

The sequence is that of RNA-binding protein YbxF from Geobacillus stearothermophilus (Bacillus stearothermophilus).